The chain runs to 435 residues: NADH-quinone oxidoreductase subunit D (435 aa).

This sequence belongs to the complex I 49 kDa subunit family. In terms of assembly, NDH-1 is composed of 14 different subunits. Subunits NuoB, C, D, E, F, and G constitute the peripheral sector of the complex.

The protein localises to the cell membrane. It catalyses the reaction a quinone + NADH + 5 H(+)(in) = a quinol + NAD(+) + 4 H(+)(out). NDH-1 shuttles electrons from NADH, via FMN and iron-sulfur (Fe-S) centers, to quinones in the respiratory chain. The immediate electron acceptor for the enzyme in this species is believed to be ubiquinone. Couples the redox reaction to proton translocation (for every two electrons transferred, four hydrogen ions are translocated across the cytoplasmic membrane), and thus conserves the redox energy in a proton gradient. In Stenotrophomonas maltophilia (strain K279a), this protein is NADH-quinone oxidoreductase subunit D.